Consider the following 306-residue polypeptide: Glutaminase (306 aa).

Residues S64, N115, E159, N166, Y190, Y242, and V260 each contribute to the substrate site.

The protein belongs to the glutaminase family. As to quaternary structure, homotetramer.

It carries out the reaction L-glutamine + H2O = L-glutamate + NH4(+). This chain is Glutaminase, found in Aliivibrio fischeri (strain MJ11) (Vibrio fischeri).